We begin with the raw amino-acid sequence, 74 residues long: U5-theraphotoxin-Cg1a (74 aa).

The signal sequence occupies residues 1–19; that stretch reads MNATIFALLLLLNLAMYNA. Residues 20-39 constitute a propeptide that is removed on maturation; it reads AEQSSETDMDDTLLIPENYR. 3 cysteine pairs are disulfide-bonded: cysteine 42–cysteine 56, cysteine 49–cysteine 61, and cysteine 55–cysteine 71.

It belongs to the neurotoxin 36 family. 01 subfamily. In terms of tissue distribution, expressed by the venom gland.

The protein localises to the secreted. In terms of biological role, probable ion channel inhibitor. This is U5-theraphotoxin-Cg1a from Chilobrachys guangxiensis (Chinese earth tiger tarantula).